The primary structure comprises 474 residues: MTKKLHIKTWGCQMNEYDSSKMADLLASTHGYQLTTIPEEADLLLLNTCSIREKAQEKVFSLLGQWKLLKEKNPQLIIGVGGCVASQEGEQLRQRAPCVDVIFGPQTLHRLPEMINHVQGTNSPVVDISFPEIEKFDRLPEPRAEGPTAFVSIMEGCNKYCTFCVVPYTRGEEVSRPSDDILFEIAQLAAQGVREVNLLGQNVNAYRGATYDGDICSFAELLRLVAAIDGIDRVRFTTSHPIEFTDDIIDVYRDTPELVSFLHLPVQSGSDRILTMMKRAHTALEYKAIIRKLRQARPDIQISSDFIVGFPGETQQDFEQTMKLVADIHFDTSYSFIYSPRPGTPAADLPNNVSEEEKKQRLHILQQRISQQAMEISRKMVGTVQRVLVEGTSRKNVMELAGRTENNRVVNFEGSPDMIGKFVDVEIVNVYASSLRGILLRTEDQMDLRTHESPQSVIARTRKENEIGVGIYQP.

An MTTase N-terminal domain is found at 3–120 (KKLHIKTWGC…LPEMINHVQG (118 aa)). Residues Cys-12, Cys-49, Cys-83, Cys-157, Cys-161, and Cys-164 each contribute to the [4Fe-4S] cluster site. The region spanning 143-375 (RAEGPTAFVS…QQRISQQAME (233 aa)) is the Radical SAM core domain. The 64-residue stretch at 378 to 441 (RKMVGTVQRV…ASSLRGILLR (64 aa)) folds into the TRAM domain.

Belongs to the methylthiotransferase family. MiaB subfamily. Monomer. [4Fe-4S] cluster serves as cofactor.

The protein resides in the cytoplasm. It catalyses the reaction N(6)-dimethylallyladenosine(37) in tRNA + (sulfur carrier)-SH + AH2 + 2 S-adenosyl-L-methionine = 2-methylsulfanyl-N(6)-dimethylallyladenosine(37) in tRNA + (sulfur carrier)-H + 5'-deoxyadenosine + L-methionine + A + S-adenosyl-L-homocysteine + 2 H(+). Its function is as follows. Catalyzes the methylthiolation of N6-(dimethylallyl)adenosine (i(6)A), leading to the formation of 2-methylthio-N6-(dimethylallyl)adenosine (ms(2)i(6)A) at position 37 in tRNAs that read codons beginning with uridine. This Yersinia pestis bv. Antiqua (strain Antiqua) protein is tRNA-2-methylthio-N(6)-dimethylallyladenosine synthase.